Reading from the N-terminus, the 201-residue chain is Increased recombination centers protein 21 (201 aa).

Residues 122-200 enclose the Cytochrome b5 heme-binding domain; it reads PLRINRKIVK…LQVCFIGVVC (79 aa). Heme contacts are provided by histidine 158 and histidine 182.

The protein belongs to the cytochrome b5 family.

Functionally, involved in resistance to carboplatin and cisplatin. Is probably involved in a pathway contributing to genomic integrity. The polypeptide is Increased recombination centers protein 21 (IRC21) (Saccharomyces cerevisiae (strain ATCC 204508 / S288c) (Baker's yeast)).